The sequence spans 874 residues: Valine--tRNA ligase (874 aa).

The segment at 1–22 (MTENSQQPQPAPSTELPTQYTP) is disordered. The 'HIGH' region motif lies at 57–67 (PNVTGSLHLGH). Positions 531–535 (KMSKS) match the 'KMSKS' region motif. Lys-534 provides a ligand contact to ATP. The stretch at 805 to 871 (VIDFAAERKR…TRITAQLEKL (67 aa)) forms a coiled coil.

This sequence belongs to the class-I aminoacyl-tRNA synthetase family. ValS type 1 subfamily. In terms of assembly, monomer.

It is found in the cytoplasm. The catalysed reaction is tRNA(Val) + L-valine + ATP = L-valyl-tRNA(Val) + AMP + diphosphate. In terms of biological role, catalyzes the attachment of valine to tRNA(Val). As ValRS can inadvertently accommodate and process structurally similar amino acids such as threonine, to avoid such errors, it has a 'posttransfer' editing activity that hydrolyzes mischarged Thr-tRNA(Val) in a tRNA-dependent manner. This is Valine--tRNA ligase from Streptomyces coelicolor (strain ATCC BAA-471 / A3(2) / M145).